The sequence spans 520 residues: GMP synthase [glutamine-hydrolyzing] (520 aa).

One can recognise a Glutamine amidotransferase type-1 domain in the interval 13 to 205 (KIIVLDYGSQ…ALNICKAKGD (193 aa)). Cys90 (nucleophile) is an active-site residue. Residues His179 and Glu181 contribute to the active site. One can recognise a GMPS ATP-PPase domain in the interval 206–395 (WSMDNFIDMQ…LGMPDHIVWR (190 aa)). 233–239 (SGGVDSS) contributes to the ATP binding site.

In terms of assembly, homodimer.

It catalyses the reaction XMP + L-glutamine + ATP + H2O = GMP + L-glutamate + AMP + diphosphate + 2 H(+). The protein operates within purine metabolism; GMP biosynthesis; GMP from XMP (L-Gln route): step 1/1. Its function is as follows. Catalyzes the synthesis of GMP from XMP. The protein is GMP synthase [glutamine-hydrolyzing] of Streptococcus pneumoniae serotype 2 (strain D39 / NCTC 7466).